Reading from the N-terminus, the 388-residue chain is MAGSATVEKRLDFGLLGPLQMTIDGTPVPSGTPKQRAVLAMLVINRNRPVGVDALITALWEEWPPSGARASIHSYVSNLRKLLGGAGIDPRVVLAAAPPGYRLSIPDNTCDLGRFVAEKTAGVHAAAAGRFEQASRHLSAALREWRGPVLDDLRDFQFVEPFATALVEDKVLAHTAKAEAEIACGRASAVIAELEALTFEHPYREPLWTQLITAYYLSDRQSDALGAYRRVKTTLADDLGIDPGPTLRALNERILRQQPLDAKKSAKTTAAGTVTVLDQRTMASGQQAVAYLHDIASGRGYPLQAAATRIGRLHDNDIVLDSANVSRHHAVIVDTGTNYVINDLRSSNGVHVQHERIRSAVTLNDGDHIRICDHEFTFQISAGTHGGT.

Positions 2–105 (AGSATVEKRL…AAPPGYRLSI (104 aa)) form a DNA-binding region, ompR/PhoB-type. Residues 308-357 (TRIGRLHDNDIVLDSANVSRHHAVIVDTGTNYVINDLRSSNGVHVQHERI) enclose the FHA domain.

The protein belongs to the AfsR/DnrI/RedD regulatory family. Post-translationally, phosphorylated on threonine residue(s).

Its function is as follows. Positively regulates the transcription of the embCAB operon. Exhibits ATPase and GTPase activities. This is Transcriptional regulatory protein EmbR (embR) from Mycobacterium bovis (strain ATCC BAA-935 / AF2122/97).